A 363-amino-acid polypeptide reads, in one-letter code: MTHQYPALTAEQKKELQDIAQRIVAPGKGILAADESTGSMAKRLNPIGVENTEENRRLYRQLLFSADERIDKCIGGVIFFHETLYQNTDDGTNFAQLIKDRGIVVGIKVDKGVVPLAGTNGETTTQGLDGLSERCAQYKKDGADFAKWRSVLKISDTTPSELAIMENANVLARYASICQQNGIVPIVEPEILPDGEHDLKRCQYVTEKVLAACYKALSDHHVYLEGTLLKPNMVTAGHSCPTKYSSEEIAMATVTALRRTVPPAVSGVTFLSGGQSEEEASVNLNSINNCPLAKPWPLTFSYGRALQASALSAWRGAKSNEKAATEEFIKRAEANGLAAQGKYVSSGTCGAAGQSLYVANHAY.

Residues R56 and K147 each contribute to the substrate site. The Proton acceptor role is filled by E188. Catalysis depends on K230, which acts as the Schiff-base intermediate with dihydroxyacetone-P.

Belongs to the class I fructose-bisphosphate aldolase family. In terms of assembly, homotetramer.

It catalyses the reaction beta-D-fructose 1,6-bisphosphate = D-glyceraldehyde 3-phosphate + dihydroxyacetone phosphate. It functions in the pathway carbohydrate degradation; glycolysis; D-glyceraldehyde 3-phosphate and glycerone phosphate from D-glucose: step 4/4. This is Fructose-bisphosphate aldolase C-B (aldocb) from Danio rerio (Zebrafish).